Reading from the N-terminus, the 542-residue chain is Calcium/calmodulin-dependent protein kinase type II subunit beta (542 aa).

Positions 14-272 (YQLYEDIGKG…AHEALKHPWV (259 aa)) constitute a Protein kinase domain. Tyrosine 17 is modified (phosphotyrosine). Residues 20-28 (IGKGAFSVV) and lysine 43 contribute to the ATP site. Residue aspartate 136 is the Proton acceptor of the active site. The autoinhibitory domain stretch occupies residues 283–292 (HRQETVECLK). Phosphothreonine; by autocatalysis is present on threonine 287. The interval 291-301 (LKKFNARRKLK) is calmodulin-binding. Threonine 306 and threonine 307 each carry phosphothreonine; by autocatalysis. Residues 349–407 (ADGVKPQTNSTKNSAAATSPKGTLPPAALEPQTTVIHNPVDGIKESSDSTHTTIEDEDT) are disordered. Positions 354–369 (PQTNSTKNSAAATSPK) are enriched in polar residues. Phosphoserine occurs at positions 367, 394, and 397. Threonine 400 and threonine 401 each carry phosphothreonine.

The protein belongs to the protein kinase superfamily. CAMK Ser/Thr protein kinase family. CaMK subfamily. As to quaternary structure, CAMK2 is composed of 4 different chains: alpha (CAMK2A), beta (CAMK2B), gamma (CAMK2G), and delta (CAMK2D). The different isoforms assemble into homo- or heteromultimeric holoenzymes composed of 12 subunits with two hexameric rings stacked one on top of the other. Interacts with SYNGAP1, CAMK2N2 and MPDZ. Interacts with FOXO3. Interacts (when in a kinase inactive state not associated with calmodulin) with ARC; leading to target ARC to inactive synapses. Interacts with CAMK2N1; this interaction requires CAMK2B activation by Ca(2+). Post-translationally, autophosphorylation of Thr-287 following activation by Ca(2+)/calmodulin. Phosphorylation of Thr-287 locks the kinase into an activated state.

The protein resides in the cytoplasm. It is found in the cytoskeleton. It localises to the microtubule organizing center. The protein localises to the centrosome. Its subcellular location is the sarcoplasmic reticulum membrane. The protein resides in the synapse. The enzyme catalyses L-seryl-[protein] + ATP = O-phospho-L-seryl-[protein] + ADP + H(+). The catalysed reaction is L-threonyl-[protein] + ATP = O-phospho-L-threonyl-[protein] + ADP + H(+). Activated by Ca(2+)/calmodulin. Binding of calmodulin results in conformational change that relieves intrasteric autoinhibition and allows autophosphorylation of Thr-287 which turns the kinase in a constitutively active form and confers to the kinase a Ca(2+)-independent activity. Calcium/calmodulin-dependent protein kinase that functions autonomously after Ca(2+)/calmodulin-binding and autophosphorylation, and is involved in dendritic spine and synapse formation, neuronal plasticity and regulation of sarcoplasmic reticulum Ca(2+) transport in skeletal muscle. In neurons, plays an essential structural role in the reorganization of the actin cytoskeleton during plasticity by binding and bundling actin filaments in a kinase-independent manner. This structural function is required for correct targeting of CaMK2A, which acts downstream of NMDAR to promote dendritic spine and synapse formation and maintain synaptic plasticity which enables long-term potentiation (LTP) and hippocampus-dependent learning. In developing hippocampal neurons, promotes arborization of the dendritic tree and in mature neurons, promotes dendritic remodeling. Also regulates the migration of developing neurons. Participates in the modulation of skeletal muscle function in response to exercise. In slow-twitch muscles, is involved in regulation of sarcoplasmic reticulum (SR) Ca(2+) transport and in fast-twitch muscle participates in the control of Ca(2+) release from the SR through phosphorylation of triadin, a ryanodine receptor-coupling factor, and phospholamban (PLN/PLB), an endogenous inhibitor of SERCA2A/ATP2A2. In response to interferon-gamma (IFN-gamma) stimulation, catalyzes phosphorylation of STAT1, stimulating the JAK-STAT signaling pathway. Phosphorylates reticulophagy regulator RETREG1 at 'Ser-147' under endoplasmic reticulum stress conditions which enhances RETREG1 oligomerization and its membrane scission and reticulophagy activity. This is Calcium/calmodulin-dependent protein kinase type II subunit beta (CAMK2B) from Bos taurus (Bovine).